The chain runs to 349 residues: S-adenosylmethionine:tRNA ribosyltransferase-isomerase (349 aa).

The protein belongs to the QueA family. Monomer.

It localises to the cytoplasm. It carries out the reaction 7-aminomethyl-7-carbaguanosine(34) in tRNA + S-adenosyl-L-methionine = epoxyqueuosine(34) in tRNA + adenine + L-methionine + 2 H(+). It participates in tRNA modification; tRNA-queuosine biosynthesis. Its function is as follows. Transfers and isomerizes the ribose moiety from AdoMet to the 7-aminomethyl group of 7-deazaguanine (preQ1-tRNA) to give epoxyqueuosine (oQ-tRNA). In Pseudomonas putida (strain ATCC 700007 / DSM 6899 / JCM 31910 / BCRC 17059 / LMG 24140 / F1), this protein is S-adenosylmethionine:tRNA ribosyltransferase-isomerase.